The primary structure comprises 131 residues: Small ribosomal subunit protein eS8 (131 aa).

The disordered stretch occupies residues 11–36; sequence DLKKPSGGKKGRVRKTKKKALCGGPP. Basic residues predominate over residues 16–30; the sequence is SGGKKGRVRKTKKKA.

Belongs to the eukaryotic ribosomal protein eS8 family. In terms of assembly, part of the 30S ribosomal subunit.

The sequence is that of Small ribosomal subunit protein eS8 from Pyrobaculum islandicum (strain DSM 4184 / JCM 9189 / GEO3).